Here is a 312-residue protein sequence, read N- to C-terminus: MTQSTPIRIATRKSPLALWQAHFVKDALQAAHPGLEVELVTMVTKGDVILDTPLAKVGGKGLFVKELEVAMLEGRADLAVHSMKDVPVDFPEGLGLVTICEREDPRDAFVSNTYSNINELPQGAVVGTCSLRRQCQLKEYRPDIIIKELRGNVGTRLGKLDAGEYDAIILAAAGLKRLKLEDRIRSFIEPEQSLPAVGQGAVGIECRVDDERLLKLLEPLNHKDTADRVLCERAMNLTLEGGCQVPIGSYALLEGDEIWLRALVGEPDGSEIVRGEVRGHRKDGEALGIQLANELLDSGARDILTKLYADHD.

The residue at position 243 (Cys243) is an S-(dipyrrolylmethanemethyl)cysteine.

Belongs to the HMBS family. Monomer. Requires dipyrromethane as cofactor.

It catalyses the reaction 4 porphobilinogen + H2O = hydroxymethylbilane + 4 NH4(+). It functions in the pathway porphyrin-containing compound metabolism; protoporphyrin-IX biosynthesis; coproporphyrinogen-III from 5-aminolevulinate: step 2/4. Its function is as follows. Tetrapolymerization of the monopyrrole PBG into the hydroxymethylbilane pre-uroporphyrinogen in several discrete steps. The protein is Porphobilinogen deaminase of Vibrio parahaemolyticus serotype O3:K6 (strain RIMD 2210633).